The chain runs to 79 residues: MKFLILAGLLSTATALPIPLEQYAESSSEQRFIFYPPQVPPFFPQVLFPLPPQPPLVLTPNDLIALLIAILNQLGILFP.

Residues 1 to 15 (MKFLILAGLLSTATA) form the signal peptide.

The protein resides in the secreted. Tooth-associated epithelia protein that may participate in structuring the basal lamina at cell-tooth interface. This Homo sapiens (Human) protein is Secretory calcium-binding phosphoprotein proline-glutamine rich 1.